The primary structure comprises 383 residues: Protein delta homolog 1 (383 aa).

Residues Met-1–Gly-23 form the signal peptide. EGF-like domains are found at residues Ala-24–Asp-55, Leu-53–Asp-86, Asp-88–Gln-125, Lys-127–Glu-168, Val-170–Ser-206, and Pro-208–Val-245. Topologically, residues Ala-24–Gln-303 are extracellular. Disulfide bonds link Cys-26/Cys-37, Cys-30/Cys-43, Cys-45/Cys-54, Cys-57/Cys-68, Cys-63/Cys-74, Cys-76/Cys-85, Cys-92/Cys-103, Cys-97/Cys-113, Cys-115/Cys-124, Cys-131/Cys-144, Cys-138/Cys-156, and Cys-158/Cys-167. O-linked (GalNAc...) serine glycosylation is present at Ser-94. N-linked (GlcNAc...) asparagine glycosylation occurs at Asn-100. Thr-143 is a glycosylation site (O-linked (GalNAc...) threonine). Ser-163 carries O-linked (GalNAc...) serine; partial glycosylation. 2 N-linked (GlcNAc...) asparagine; atypical; partial glycosylation sites follow: Asn-165 and Asn-172. 6 disulfide bridges follow: Cys-174–Cys-185, Cys-179–Cys-194, Cys-196–Cys-205, Cys-212–Cys-223, Cys-217–Cys-233, and Cys-235–Cys-244. Ser-214 carries an O-linked (GalNAc...) serine glycan. Thr-222 carries O-linked (GalNAc...) threonine; partial glycosylation. The O-linked (GalNAc...) serine; partial glycan is linked to Ser-251. Thr-256 carries an O-linked (GalNAc...) threonine glycan. The O-linked (GalNAc...) serine; partial glycan is linked to Ser-260. The chain crosses the membrane as a helical span at residues Ala-304–Leu-327. The Cytoplasmic segment spans residues Asn-328–Ile-383.

As to quaternary structure, monomer. Interacts with SH3RF2. Post-translationally, N- and O-glycosylated. O-glycosylated with core 1 or possibly core 8 glycans. As to expression, found within the stromal cells in close contact to the vascular structure of placental villi, yolk sac, fetal liver, adrenal cortex and pancreas and in the beta cells of the islets of Langerhans in the adult pancreas. Found also in some forms of neuroendocrine lung tumor tissue.

The protein resides in the membrane. It localises to the cytoplasm. May have a role in neuroendocrine differentiation. The chain is Protein delta homolog 1 (DLK1) from Homo sapiens (Human).